A 2130-amino-acid polypeptide reads, in one-letter code: Bromodomain adjacent to zinc finger domain protein 2B (2130 aa).

7 disordered regions span residues 1 to 42 (MESG…TGAA), 82 to 118 (LFAP…SLNG), 151 to 293 (GGRK…QKQP), 491 to 518 (KTTG…PVSN), 543 to 633 (VDSD…SSIG), 756 to 790 (EGRR…GSTE), and 944 to 966 (RKKA…LNKE). Low complexity predominate over residues 8-33 (TSSSVSSTAAASSPVSSTPSVASAVS). Low complexity predominate over residues 183 to 206 (ESSSNSDSDSGSSSDTSSEGISSS). Residues 207 to 234 (DSDDLEEDEEEEEDQSAEESEDDESDSE) show a composition bias toward acidic residues. Positions 250–270 (GVKDMKTDGQKAHEKSQEKRT) are enriched in basic and acidic residues. Residues 272–283 (QQIPLVSDSQTH) are compositionally biased toward polar residues. Over residues 284–293 (SSFQSQQKQP) the composition is skewed to low complexity. The segment covering 492 to 505 (TTGNRTLVVPSTSP) has biased composition (polar residues). A compositionally biased stretch (basic and acidic residues) spans 543–554 (VDSDAPSSKESD). Over residues 555-611 (DSNDDDDDDEDEDEDDEDDDSDDSQSESDSNSESDTDGSEDEDDEDDKDQDESDTDT) the composition is skewed to acidic residues. The span at 623–633 (TGSSIKSSSIG) shows a compositional bias: low complexity. Positions 687 to 762 (VTDERELRVP…RAMEGRRGRP (76 aa)) constitute an MBD domain. The segment covering 756–775 (EGRRGRPPNPDRQHSREESR) has biased composition (basic and acidic residues). Residues 797–984 (AKLLRKLQAQ…ELEMAKELKK (188 aa)) adopt a coiled-coil conformation. The DDT domain maps to 1010–1075 (GSTFSDCLMI…VTAAVCDPGL (66 aa)). 4 disordered regions span residues 1186–1265 (TGKR…DQTV), 1431–1454 (SLCS…NLFS), 1499–1545 (VTHV…PFAM), and 1773–1795 (HKKH…ERKN). Residues 1220 to 1244 (SDYDDDDDDDSDDQADEDDEDEEDK) are compositionally biased toward acidic residues. Residues 1245-1254 (EDKKGKKAEV) show a composition bias toward basic and acidic residues. A compositionally biased stretch (pro residues) spans 1514-1526 (SHPPSKSPSPVPS). The segment at 1895–1945 (KVYCQICRKGDNEELLLLCDGCDKGCHTYCHRPKITTIPDGDWFCPACIAK) adopts a PHD-type zinc-finger fold. The segment at 1957-2019 (QIKGKKSNEQ…KQENFTAIKK (63 aa)) is disordered. A compositionally biased stretch (basic and acidic residues) spans 1991–2002 (GKTEPKKRKMDE). The segment covering 2004 to 2014 (VSVSQGKQENF) has biased composition (polar residues). One can recognise a Bromo domain in the interval 2022–2126 (RDDSKDLAIC…KYFEKKWTEI (105 aa)).

This sequence belongs to the WAL family.

Its subcellular location is the nucleus. Its function is as follows. Regulatory subunit of the ATP-dependent BRF-1 and BRF-5 ISWI chromatin remodeling complexes, which form ordered nucleosome arrays on chromatin and facilitate access to DNA during DNA-templated processes such as DNA replication, transcription, and repair. Both complexes regulate the spacing of nucleosomes along the chromatin and have the ability to slide mononucleosomes to the center of a DNA template. The BRF-1 ISWI chromatin remodeling complex has a lower ATP hydrolysis rate than the BRF-5 ISWI chromatin remodeling complex. Chromatin reader protein. Represses the expression of mitochondrial function-related genes, perhaps by transcriptional regulation. The chain is Bromodomain adjacent to zinc finger domain protein 2B (BAZ2B) from Gallus gallus (Chicken).